A 192-amino-acid polypeptide reads, in one-letter code: Cytidylate kinase (192 aa).

Position 12 to 20 (12 to 20 (GLAGSGTTT)) interacts with ATP.

Belongs to the cytidylate kinase family. Type 2 subfamily.

The protein resides in the cytoplasm. It carries out the reaction CMP + ATP = CDP + ADP. The catalysed reaction is dCMP + ATP = dCDP + ADP. The polypeptide is Cytidylate kinase (Pyrococcus furiosus (strain ATCC 43587 / DSM 3638 / JCM 8422 / Vc1)).